Consider the following 183-residue polypeptide: Troponin I, fast skeletal muscle (183 aa).

Serine 2 carries the N-acetylserine modification. The interval serine 2–histidine 48 is involved in binding TNC. The interval serine 97–methionine 117 is involved in binding TNC and actin.

Belongs to the troponin I family. Binds to actin and tropomyosin. The N-terminus is blocked.

Troponin I is the inhibitory subunit of troponin, the thin filament regulatory complex which confers calcium-sensitivity to striated muscle actomyosin ATPase activity. The sequence is that of Troponin I, fast skeletal muscle (TNNI2) from Gallus gallus (Chicken).